Consider the following 448-residue polypeptide: Adenylosuccinate synthetase (448 aa).

GTP is bound by residues G36–K42 and G64–T66. D37 (proton acceptor) is an active-site residue. The Mg(2+) site is built by D37 and G64. IMP is bound by residues D37–K40, N62–H65, T154, R168, N246, T261, and R325. The active-site Proton donor is the H65. Substrate is bound at residue V321–R327. Residues R327, K353 to D355, and G436 to G438 contribute to the GTP site.

This sequence belongs to the adenylosuccinate synthetase family. Homodimer. Mg(2+) serves as cofactor.

It is found in the cytoplasm. It carries out the reaction IMP + L-aspartate + GTP = N(6)-(1,2-dicarboxyethyl)-AMP + GDP + phosphate + 2 H(+). The protein operates within purine metabolism; AMP biosynthesis via de novo pathway; AMP from IMP: step 1/2. Its function is as follows. Plays an important role in the de novo pathway and in the salvage pathway of purine nucleotide biosynthesis. Catalyzes the first committed step in the biosynthesis of AMP from IMP. The sequence is that of Adenylosuccinate synthetase from Drosophila pseudoobscura pseudoobscura (Fruit fly).